We begin with the raw amino-acid sequence, 403 residues long: Tyrosine--tRNA ligase (403 aa).

Residues 42-51 (PTAPDLHLGH) carry the 'HIGH' region motif. The short motif at 226–230 (KMSKS) is the 'KMSKS' region element. Lys-229 contributes to the ATP binding site. Residues 336 to 396 (MPISAVLNKA…GKKAFGRVTL (61 aa)) enclose the S4 RNA-binding domain.

Belongs to the class-I aminoacyl-tRNA synthetase family. TyrS type 2 subfamily. Homodimer.

It is found in the cytoplasm. It catalyses the reaction tRNA(Tyr) + L-tyrosine + ATP = L-tyrosyl-tRNA(Tyr) + AMP + diphosphate + H(+). Catalyzes the attachment of tyrosine to tRNA(Tyr) in a two-step reaction: tyrosine is first activated by ATP to form Tyr-AMP and then transferred to the acceptor end of tRNA(Tyr). This is Tyrosine--tRNA ligase from Pseudomonas syringae pv. syringae (strain B728a).